Reading from the N-terminus, the 145-residue chain is 3-dehydroquinate dehydratase (145 aa).

Residue tyrosine 22 is the Proton acceptor of the active site. 3 residues coordinate substrate: asparagine 71, histidine 77, and aspartate 84. The active-site Proton donor is the histidine 97. Substrate is bound by residues 98–99 and arginine 108; that span reads IS.

The protein belongs to the type-II 3-dehydroquinase family. In terms of assembly, homododecamer.

It carries out the reaction 3-dehydroquinate = 3-dehydroshikimate + H2O. The protein operates within metabolic intermediate biosynthesis; chorismate biosynthesis; chorismate from D-erythrose 4-phosphate and phosphoenolpyruvate: step 3/7. Catalyzes a trans-dehydration via an enolate intermediate. This chain is 3-dehydroquinate dehydratase, found in Thermotoga neapolitana (strain ATCC 49049 / DSM 4359 / NBRC 107923 / NS-E).